Consider the following 124-residue polypeptide: MPTIQQLIRSARQDTEKQTKSPALKSCPQRRGVCTRVYTTTPKKPNSALRKVARVRLTSGFEVTAYIPGIGHNLQEHSVVMIRGGRVKDLPGVRYHIIRGTLDTAGVKDRKQSRSKYGAKKPKA.

Residues 8-30 (IRSARQDTEKQTKSPALKSCPQR) are disordered. A 3-methylthioaspartic acid modification is found at aspartate 89. The interval 103–124 (DTAGVKDRKQSRSKYGAKKPKA) is disordered. The span at 113-124 (SRSKYGAKKPKA) shows a compositional bias: basic residues.

The protein belongs to the universal ribosomal protein uS12 family. As to quaternary structure, part of the 30S ribosomal subunit. Contacts proteins S8 and S17. May interact with IF1 in the 30S initiation complex.

Functionally, with S4 and S5 plays an important role in translational accuracy. In terms of biological role, interacts with and stabilizes bases of the 16S rRNA that are involved in tRNA selection in the A site and with the mRNA backbone. Located at the interface of the 30S and 50S subunits, it traverses the body of the 30S subunit contacting proteins on the other side and probably holding the rRNA structure together. The combined cluster of proteins S8, S12 and S17 appears to hold together the shoulder and platform of the 30S subunit. In Trichodesmium erythraeum (strain IMS101), this protein is Small ribosomal subunit protein uS12.